The primary structure comprises 789 residues: Glycerol-3-phosphate acyltransferase (789 aa).

The short motif at 275–280 (SHRSYI) is the HXXXXD motif element.

This sequence belongs to the GPAT/DAPAT family.

The protein resides in the cell membrane. It catalyses the reaction sn-glycerol 3-phosphate + an acyl-CoA = a 1-acyl-sn-glycero-3-phosphate + CoA. Its pathway is phospholipid metabolism; CDP-diacylglycerol biosynthesis; CDP-diacylglycerol from sn-glycerol 3-phosphate: step 1/3. This chain is Glycerol-3-phosphate acyltransferase, found in Mycobacterium tuberculosis (strain ATCC 25177 / H37Ra).